Reading from the N-terminus, the 271-residue chain is Glutamate racemase (271 aa).

Residues 10-11 and 42-43 each bind substrate; these read DS and YG. Cysteine 73 (proton donor/acceptor) is an active-site residue. A substrate-binding site is contributed by 74 to 75; that stretch reads NT. Cysteine 183 serves as the catalytic Proton donor/acceptor. 184–185 contacts substrate; it reads TH.

The protein belongs to the aspartate/glutamate racemases family.

It carries out the reaction L-glutamate = D-glutamate. It participates in cell wall biogenesis; peptidoglycan biosynthesis. Provides the (R)-glutamate required for cell wall biosynthesis. The sequence is that of Glutamate racemase from Lactococcus lactis subsp. cremoris (strain MG1363).